Here is a 296-residue protein sequence, read N- to C-terminus: uncharacterized protein (296 aa).

Residues M1–V57 constitute a chloroplast transit peptide.

Belongs to the NAD(P)-dependent epimerase/dehydratase family.

It is found in the plastid. Its subcellular location is the chloroplast. The protein resides in the plastoglobule. This is an uncharacterized protein from Arabidopsis thaliana (Mouse-ear cress).